Reading from the N-terminus, the 249-residue chain is Probable transcriptional regulatory protein mll3945 (249 aa).

The protein belongs to the TACO1 family.

It is found in the cytoplasm. The sequence is that of Probable transcriptional regulatory protein mll3945 from Mesorhizobium japonicum (strain LMG 29417 / CECT 9101 / MAFF 303099) (Mesorhizobium loti (strain MAFF 303099)).